A 225-amino-acid chain; its full sequence is AA9 family lytic polysaccharide monooxygenase A (225 aa).

Residues 1–17 (MLTTTFALLTAALGVSA) form the signal peptide. The Cu(2+) site is built by His18 and His85. Intrachain disulfides connect Cys55–Cys173 and Cys143–Cys225. O2 contacts are provided by His159 and Gln168. Residue Tyr170 coordinates Cu(2+).

The protein belongs to the polysaccharide monooxygenase AA9 family. It depends on Cu(2+) as a cofactor.

It is found in the secreted. The enzyme catalyses [(1-&gt;4)-beta-D-glucosyl]n+m + reduced acceptor + O2 = 4-dehydro-beta-D-glucosyl-[(1-&gt;4)-beta-D-glucosyl]n-1 + [(1-&gt;4)-beta-D-glucosyl]m + acceptor + H2O.. Its activity is regulated as follows. Is able to utilize various natural phenolic compounds as reducing agents. Most of these reducing agents are present in plants, either free or as lignin building blocks, such as sinapic acid, or as flavonoids such as catechin and dopamine. Phenolic compounds with 1,2-benzenediol and 1,2,3-benzenetriol moieties yield the highest release of oxidized and non-oxidized glucooligosaccharides from cellulose compared to monophenols or sulfur-containing compounds. Its function is as follows. Lytic polysaccharide monooxygenase (LPMO) that depolymerizes crystalline and amorphous polysaccharides via the oxidation of scissile alpha- or beta-(1-4)-glycosidic bonds, yielding C1 or C4 oxidation products. Catalysis by LPMOs requires the reduction of the active-site copper from Cu(II) to Cu(I) by a reducing agent and H(2)O(2) or O(2) as a cosubstrate. Shows oxidative cleavage of xylan in addition to cellulose. Shows a strong synergistic effect with endoglucanase I (EGI) with a 16-fold higher release of detected oligosaccharides. The sequence is that of AA9 family lytic polysaccharide monooxygenase A from Thermothelomyces thermophilus (strain ATCC 42464 / BCRC 31852 / DSM 1799) (Sporotrichum thermophile).